A 97-amino-acid polypeptide reads, in one-letter code: Class II hydrophobin A (97 aa).

The N-terminal stretch at 1–15 is a signal peptide; that stretch reads MKSVVFASLIASALA. 3 cysteine pairs are disulfide-bonded: Cys30-Cys79, Cys40-Cys53, and Cys80-Cys91.

The protein belongs to the cerato-ulmin hydrophobin family.

It is found in the secreted. Its subcellular location is the cell wall. The protein resides in the vacuole. It localises to the cytoplasmic vesicle. Aerial growth, conidiation, and dispersal of filamentous fungi in the environment rely upon a capability of their secreting small amphipathic proteins called hydrophobins (HPBs) with low sequence identity. Class I can self-assemble into an outermost layer of rodlet bundles on aerial cell surfaces, conferring cellular hydrophobicity that supports fungal growth, development and dispersal; whereas Class II form highly ordered films at water-air interfaces through intermolecular interactions but contribute nothing to the rodlet structure. Hyd2A contributes to certain cell wall-related features, such as hydrophobicity but is not involved in cell wall-related events during fungal proliferation in host hemocoel. Does not contribute to conidial hydrophobicity. Involved in insect hemocoel colonization independent of cell hydrophobicity, as well as in the asexual development. The polypeptide is Class II hydrophobin A (Beauveria bassiana (strain ARSEF 2860) (White muscardine disease fungus)).